A 74-amino-acid chain; its full sequence is DNA-directed RNA polymerase subunit omega (74 aa).

It belongs to the RNA polymerase subunit omega family. In terms of assembly, the RNAP catalytic core consists of 2 alpha, 1 beta, 1 beta' and 1 omega subunit. When a sigma factor is associated with the core the holoenzyme is formed, which can initiate transcription.

It carries out the reaction RNA(n) + a ribonucleoside 5'-triphosphate = RNA(n+1) + diphosphate. Promotes RNA polymerase assembly. Latches the N- and C-terminal regions of the beta' subunit thereby facilitating its interaction with the beta and alpha subunits. The polypeptide is DNA-directed RNA polymerase subunit omega (Solidesulfovibrio magneticus (strain ATCC 700980 / DSM 13731 / RS-1) (Desulfovibrio magneticus)).